Reading from the N-terminus, the 252-residue chain is MAGHSKWANIKRQKAVVDAKKGKTFTQLSRAIILAARSGVPDPSGNFQLRTAIDKAKAAGIPNDNIERAIAKGAGTFGGDNASLEEIRYEGYGPGGVAILIEALTDNRNRTAADLRVAFSKNGGNLGETGCVSWMFDQKGVCVVSGVVDEDQLLEASLEGGAESYEMTEDETAEVFTEVANLEILNQTLKDQGFKVTDAELRWIPSNHLEVTEPDQARSLLKLIDTLEGLDDVQNVTSNFEMSENLMAVSFA.

Belongs to the TACO1 family.

The protein resides in the cytoplasm. This Nostoc sp. (strain PCC 7120 / SAG 25.82 / UTEX 2576) protein is Probable transcriptional regulatory protein all4276.